The chain runs to 528 residues: Bifunctional purine biosynthesis protein PurH (528 aa).

Residues 1–146 enclose the MGS-like domain; sequence MAPTALLSVS…KNHDHVAVLT (146 aa).

Belongs to the PurH family.

It catalyses the reaction (6R)-10-formyltetrahydrofolate + 5-amino-1-(5-phospho-beta-D-ribosyl)imidazole-4-carboxamide = 5-formamido-1-(5-phospho-D-ribosyl)imidazole-4-carboxamide + (6S)-5,6,7,8-tetrahydrofolate. The enzyme catalyses IMP + H2O = 5-formamido-1-(5-phospho-D-ribosyl)imidazole-4-carboxamide. It functions in the pathway purine metabolism; IMP biosynthesis via de novo pathway; 5-formamido-1-(5-phospho-D-ribosyl)imidazole-4-carboxamide from 5-amino-1-(5-phospho-D-ribosyl)imidazole-4-carboxamide (10-formyl THF route): step 1/1. The protein operates within purine metabolism; IMP biosynthesis via de novo pathway; IMP from 5-formamido-1-(5-phospho-D-ribosyl)imidazole-4-carboxamide: step 1/1. This Synechococcus sp. (strain WH7803) protein is Bifunctional purine biosynthesis protein PurH.